A 245-amino-acid chain; its full sequence is 1-(5-phosphoribosyl)-5-[(5-phosphoribosylamino)methylideneamino] imidazole-4-carboxamide isomerase (245 aa).

Aspartate 8 functions as the Proton acceptor in the catalytic mechanism. The active-site Proton donor is aspartate 129.

Belongs to the HisA/HisF family.

Its subcellular location is the cytoplasm. It carries out the reaction 1-(5-phospho-beta-D-ribosyl)-5-[(5-phospho-beta-D-ribosylamino)methylideneamino]imidazole-4-carboxamide = 5-[(5-phospho-1-deoxy-D-ribulos-1-ylimino)methylamino]-1-(5-phospho-beta-D-ribosyl)imidazole-4-carboxamide. The protein operates within amino-acid biosynthesis; L-histidine biosynthesis; L-histidine from 5-phospho-alpha-D-ribose 1-diphosphate: step 4/9. This chain is 1-(5-phosphoribosyl)-5-[(5-phosphoribosylamino)methylideneamino] imidazole-4-carboxamide isomerase, found in Rhodopseudomonas palustris (strain HaA2).